Here is a 375-residue protein sequence, read N- to C-terminus: uncharacterized protein (375 aa).

This is an uncharacterized protein from Ureaplasma parvum serovar 3 (strain ATCC 700970).